The following is a 466-amino-acid chain: Ribulose bisphosphate carboxylase/oxygenase activase, chloroplastic (466 aa).

Residues 1–48 constitute a chloroplast transit peptide; the sequence is MAAAFSSTVGAPASTPTNFLGKKLKKQVTSAVNYHGKSSNINRFKVMA. Residue 156–163 participates in ATP binding; sequence GGKGQGKS. The tract at residues 429 to 454 is disordered; sequence QGAQQAGNLPVPEGCTDPVAKNFDPT.

This sequence belongs to the RuBisCO activase family.

Its subcellular location is the plastid. The protein resides in the chloroplast stroma. In terms of biological role, activation of RuBisCO (ribulose-1,5-bisphosphate carboxylase/oxygenase; EC 4.1.1.39) involves the ATP-dependent carboxylation of the epsilon-amino group of lysine leading to a carbamate structure. This is Ribulose bisphosphate carboxylase/oxygenase activase, chloroplastic (RCA) from Oryza sativa subsp. japonica (Rice).